A 363-amino-acid chain; its full sequence is Holliday junction branch migration complex subunit RuvB (363 aa).

A disordered region spans residues 1-32 (MSDVERTEFEIPGGIPPRRNGGQGRAADTNVD). The segment at 27–207 (ADTNVDANLK…FGFTAQMEFY (181 aa)) is large ATPase domain (RuvB-L). ATP is bound by residues L46, R47, G88, K91, T92, T93, 154–156 (EDF), R197, Y207, and R244. Mg(2+) is bound at residue T92. The segment at 208–278 (DVPDLTKVVK…AANAALIVFD (71 aa)) is small ATPAse domain (RuvB-S). Residues 281 to 363 (EVGLDRLDRA…EPPEGTIGDY (83 aa)) are head domain (RuvB-H). Positions 336 and 341 each coordinate DNA.

It belongs to the RuvB family. As to quaternary structure, homohexamer. Forms an RuvA(8)-RuvB(12)-Holliday junction (HJ) complex. HJ DNA is sandwiched between 2 RuvA tetramers; dsDNA enters through RuvA and exits via RuvB. An RuvB hexamer assembles on each DNA strand where it exits the tetramer. Each RuvB hexamer is contacted by two RuvA subunits (via domain III) on 2 adjacent RuvB subunits; this complex drives branch migration. In the full resolvosome a probable DNA-RuvA(4)-RuvB(12)-RuvC(2) complex forms which resolves the HJ.

It localises to the cytoplasm. The catalysed reaction is ATP + H2O = ADP + phosphate + H(+). Its function is as follows. The RuvA-RuvB-RuvC complex processes Holliday junction (HJ) DNA during genetic recombination and DNA repair, while the RuvA-RuvB complex plays an important role in the rescue of blocked DNA replication forks via replication fork reversal (RFR). RuvA specifically binds to HJ cruciform DNA, conferring on it an open structure. The RuvB hexamer acts as an ATP-dependent pump, pulling dsDNA into and through the RuvAB complex. RuvB forms 2 homohexamers on either side of HJ DNA bound by 1 or 2 RuvA tetramers; 4 subunits per hexamer contact DNA at a time. Coordinated motions by a converter formed by DNA-disengaged RuvB subunits stimulates ATP hydrolysis and nucleotide exchange. Immobilization of the converter enables RuvB to convert the ATP-contained energy into a lever motion, pulling 2 nucleotides of DNA out of the RuvA tetramer per ATP hydrolyzed, thus driving DNA branch migration. The RuvB motors rotate together with the DNA substrate, which together with the progressing nucleotide cycle form the mechanistic basis for DNA recombination by continuous HJ branch migration. Branch migration allows RuvC to scan DNA until it finds its consensus sequence, where it cleaves and resolves cruciform DNA. This chain is Holliday junction branch migration complex subunit RuvB, found in Corynebacterium glutamicum (strain R).